A 417-amino-acid chain; its full sequence is CinA-like protein (417 aa).

Belongs to the CinA family.

The chain is CinA-like protein from Synechococcus sp. (strain RCC307).